The chain runs to 64 residues: DNA-binding protein 7b (64 aa).

2 positions are modified to N6-methyllysine: Lys5 and Lys7.

The protein belongs to the 7 kDa DNA-binding/endoribonuclease P2 family. In terms of assembly, monomer. In terms of processing, lys-5 and Lys-7 may be methylated.

It is found in the cytoplasm. Can constrain negative DNA supercoils. May be involved in maintaining the integrity of the genome at high temperature. The protein is DNA-binding protein 7b of Saccharolobus shibatae (strain ATCC 51178 / DSM 5389 / JCM 8931 / NBRC 15437 / B12) (Sulfolobus shibatae).